Reading from the N-terminus, the 152-residue chain is Prostaglandin E synthase (152 aa).

Residues Met-1–Ala-12 lie on the Lumenal side of the membrane. Residues Leu-13 to Lys-41 form a helical membrane-spanning segment. Arg-38 is a glutathione binding site. Residues Lys-42–Arg-60 lie on the Cytoplasmic side of the membrane. Residues Ser-61–Ser-90 traverse the membrane as a helical segment. Arg-73–Glu-77 provides a ligand contact to glutathione. Over Phe-91–Asn-95 the chain is Lumenal. The helical transmembrane segment at Pro-96–Gly-119 threads the bilayer. Positions 113 and 117 each coordinate glutathione. Residues Lys-120–Ala-123 are Cytoplasmic-facing. A helical membrane pass occupies residues Pro-124–Leu-152. Glutathione is bound at residue Arg-126–Tyr-130.

Belongs to the MAPEG family. Homotrimer. Glutathione is required as a cofactor.

It is found in the membrane. It localises to the cytoplasm. The protein resides in the perinuclear region. The catalysed reaction is prostaglandin H2 = prostaglandin E2. It catalyses the reaction 2-glyceryl-prostaglandin H2 = 2-glyceryl-prostaglandin E2. It carries out the reaction prostaglandin G2 = (15S)-15-hydroperoxy-prostaglandin E2. The enzyme catalyses 1-chloro-2,4-dinitrobenzene + glutathione = 2,4-dinitrophenyl-S-glutathione + chloride + H(+). The catalysed reaction is (5S)-hydroperoxy-(6E,8Z,11Z,14Z)-eicosatetraenoate + 2 glutathione = (5S)-hydroxy-(6E,8Z,11Z,14Z)-eicosatetraenoate + glutathione disulfide + H2O. It functions in the pathway lipid metabolism; prostaglandin biosynthesis. In terms of biological role, terminal enzyme of the cyclooxygenase (COX)-2-mediated prostaglandin E2 (PGE2) biosynthetic pathway. Catalyzes the glutathione-dependent oxidoreduction of prostaglandin endoperoxide H2 (PGH2) to prostaglandin E2 (PGE2) in response to inflammatory stimuli. Plays a key role in inflammation response, fever and pain. Also catalyzes the oxidoreduction of endocannabinoids into prostaglandin glycerol esters and PGG2 into 15-hydroperoxy-PGE2. In addition, displays low glutathione transferase and glutathione-dependent peroxidase activities, toward 1-chloro-2,4-dinitrobenzene and 5-hydroperoxyicosatetraenoic acid (5-HPETE), respectively. This Macaca fascicularis (Crab-eating macaque) protein is Prostaglandin E synthase (PTGES).